The primary structure comprises 309 residues: Serpentine receptor class gamma-47 (309 aa).

Helical transmembrane passes span 22–42, 140–160, 190–210, 230–250, and 272–292; these read IVQMFYGTITVVFMLILLFLF, FKLYYVILCGISIFFTSVLPL, IYSSVYFIILLLVGIISIFYI, LITLVYGFLYSGILLWSILMA, and ISSDLITLSLPYILLIFDVGI.

Belongs to the nematode receptor-like protein srg family.

Its subcellular location is the membrane. In Caenorhabditis elegans, this protein is Serpentine receptor class gamma-47 (srg-47).